Consider the following 95-residue polypeptide: MSVTRKDVDYIAELARLSFTDEEASRMTDELNSILHYVEKLGELDTEGVLPLSNIHDQKNVLRDDVERPSISNAEALQNAPDRQDRFFKVPKVIG.

It belongs to the GatC family. As to quaternary structure, heterotrimer of A, B and C subunits.

It carries out the reaction L-glutamyl-tRNA(Gln) + L-glutamine + ATP + H2O = L-glutaminyl-tRNA(Gln) + L-glutamate + ADP + phosphate + H(+). It catalyses the reaction L-aspartyl-tRNA(Asn) + L-glutamine + ATP + H2O = L-asparaginyl-tRNA(Asn) + L-glutamate + ADP + phosphate + 2 H(+). Its function is as follows. Allows the formation of correctly charged Asn-tRNA(Asn) or Gln-tRNA(Gln) through the transamidation of misacylated Asp-tRNA(Asn) or Glu-tRNA(Gln) in organisms which lack either or both of asparaginyl-tRNA or glutaminyl-tRNA synthetases. The reaction takes place in the presence of glutamine and ATP through an activated phospho-Asp-tRNA(Asn) or phospho-Glu-tRNA(Gln). The sequence is that of Aspartyl/glutamyl-tRNA(Asn/Gln) amidotransferase subunit C from Chlorobium luteolum (strain DSM 273 / BCRC 81028 / 2530) (Pelodictyon luteolum).